A 123-amino-acid chain; its full sequence is Large ribosomal subunit protein bL12 (123 aa).

It belongs to the bacterial ribosomal protein bL12 family. Homodimer. Part of the ribosomal stalk of the 50S ribosomal subunit. Forms a multimeric L10(L12)X complex, where L10 forms an elongated spine to which 2 to 4 L12 dimers bind in a sequential fashion. Binds GTP-bound translation factors.

Forms part of the ribosomal stalk which helps the ribosome interact with GTP-bound translation factors. Is thus essential for accurate translation. In Bacillus licheniformis (strain ATCC 14580 / DSM 13 / JCM 2505 / CCUG 7422 / NBRC 12200 / NCIMB 9375 / NCTC 10341 / NRRL NRS-1264 / Gibson 46), this protein is Large ribosomal subunit protein bL12.